Reading from the N-terminus, the 337-residue chain is uncharacterized protein (337 aa).

Transmembrane regions (helical) follow at residues 241 to 261 and 273 to 293; these read FTLL…GAFI and ASLI…IGII.

Belongs to the glycosyltransferase 2 family.

The protein localises to the cell membrane. This is an uncharacterized protein from Bacillus subtilis (strain 168).